Consider the following 122-residue polypeptide: Ribosomal protein eL22-like (122 aa).

Residues S112, S118, and S120 each carry the phosphoserine modification.

It belongs to the eukaryotic ribosomal protein eL22 family.

This Homo sapiens (Human) protein is Ribosomal protein eL22-like (RPL22L1).